A 1155-amino-acid chain; its full sequence is uncharacterized protein (1155 aa).

An N-terminal signal peptide occupies residues 1 to 19; that stretch reads MKKNIFITSLLILLLLLSS. The N-palmitoyl cysteine moiety is linked to residue Cys-20. Cys-20 is lipidated: S-diacylglycerol cysteine. The next 4 membrane-spanning stretches (helical) occupy residues 289–309, 395–415, 424–444, and 459–479; these read ISVS…FLIG, LGFI…FLIF, ALIT…FMLF, and ISYA…SMII.

This sequence belongs to the TrbL/VirB6 family.

It localises to the cell membrane. This is an uncharacterized protein from Rickettsia prowazekii (strain Madrid E).